A 291-amino-acid chain; its full sequence is Ribonuclease Z (291 aa).

Zn(2+) contacts are provided by His-60, His-62, Asp-64, His-65, His-132, Asp-200, and His-256. The active-site Proton acceptor is the Asp-64.

This sequence belongs to the RNase Z family. In terms of assembly, homodimer. The cofactor is Zn(2+).

It carries out the reaction Endonucleolytic cleavage of RNA, removing extra 3' nucleotides from tRNA precursor, generating 3' termini of tRNAs. A 3'-hydroxy group is left at the tRNA terminus and a 5'-phosphoryl group is left at the trailer molecule.. Functionally, zinc phosphodiesterase, which displays some tRNA 3'-processing endonuclease activity. Probably involved in tRNA maturation, by removing a 3'-trailer from precursor tRNA. This chain is Ribonuclease Z, found in Metallosphaera sedula (strain ATCC 51363 / DSM 5348 / JCM 9185 / NBRC 15509 / TH2).